We begin with the raw amino-acid sequence, 618 residues long: C2H2 finger domain transcription factor sebA (618 aa).

Residues 394-488 (GDATQSTEEM…RGRKQSLTDD (95 aa)) are disordered. Basic residues predominate over residues 406–416 (KKRVTSRRSLK). Low complexity-rich tracts occupy residues 417-432 (KAST…AKKT) and 443-458 (SDTT…SSRQ). Over residues 459-469 (NSTANTSNSES) the composition is skewed to polar residues. C2H2-type zinc fingers lie at residues 493–516 (FVCS…RSLH) and 522–544 (FECH…ARTH). Residues 582 to 597 (NAATSKSTTSESSDGT) are compositionally biased toward low complexity. Residues 582–618 (NAATSKSTTSESSDGTISDTSSVGGRPAKKRRRDDHV) are disordered. Positions 608-618 (PAKKRRRDDHV) are enriched in basic residues.

It is found in the nucleus. The protein localises to the cytoplasm. Functionally, transcription factor that is involved in the response to heat shock, oxidative stress, and poor nutrient conditions. Controls expression of oxidative stress response genes such as ccp1, cat1, cat2, sod2; as well as of heat shock genes such as hsf1, hsp30 and hsp90. Negatively controls the expression of the fumiquinazoline (fmq) cluster via binding to the STRE motifs at the fmqA-D promoters. Plays a role in virulence. The protein is C2H2 finger domain transcription factor sebA of Aspergillus fumigatus (strain ATCC MYA-4609 / CBS 101355 / FGSC A1100 / Af293) (Neosartorya fumigata).